An 86-amino-acid polypeptide reads, in one-letter code: MTTEVTQVTVEELATLMKKAAGVTVDPRDLERRANGFADFGLDSLGLLGIVGELENRYARALHRRGTCKSPRAFLDVVNGALASGA.

Positions 7–86 constitute a Carrier domain; the sequence is QVTVEELATL…VVNGALASGA (80 aa). At S44 the chain carries O-(pantetheine 4'-phosphoryl)serine.

Post-translationally, 4'-phosphopantetheine is transferred from CoA to a specific serine of the apo-ACP-like protein.

It participates in antibiotic biosynthesis; curamycin biosynthesis. Its function is as follows. Acyl carrier protein. The sequence is that of Curamycin polyketide synthase acyl carrier protein (curE) from Streptomyces cyaneus (Streptomyces curacoi).